We begin with the raw amino-acid sequence, 322 residues long: Adenine deaminase (322 aa).

Zn(2+)-binding residues include H11, H13, and H189. The active-site Proton donor is the E192. D270 contacts Zn(2+). D271 contributes to the substrate binding site.

The protein belongs to the metallo-dependent hydrolases superfamily. Adenosine and AMP deaminases family. Adenine deaminase type 2 subfamily. It depends on Zn(2+) as a cofactor.

It catalyses the reaction adenine + H2O + H(+) = hypoxanthine + NH4(+). In terms of biological role, catalyzes the hydrolytic deamination of adenine to hypoxanthine. Plays an important role in the purine salvage pathway and in nitrogen catabolism. This is Adenine deaminase from Rhizobium leguminosarum bv. trifolii (strain WSM2304).